The sequence spans 885 residues: DNA mismatch repair protein MutS (885 aa).

626–633 (GPNMGGKS) lines the ATP pocket.

This sequence belongs to the DNA mismatch repair MutS family.

Its function is as follows. This protein is involved in the repair of mismatches in DNA. It is possible that it carries out the mismatch recognition step. This protein has a weak ATPase activity. This is DNA mismatch repair protein MutS from Burkholderia lata (strain ATCC 17760 / DSM 23089 / LMG 22485 / NCIMB 9086 / R18194 / 383).